The chain runs to 390 residues: Protein dom34 (390 aa).

Belongs to the eukaryotic release factor 1 family. Pelota subfamily. As to quaternary structure, component of the Dom34-Hbs1 complex, also named Pelota-HBS1L complex, composed of dom34 and hbs1. It depends on a divalent metal cation as a cofactor.

The protein resides in the cytoplasm. In terms of biological role, component of the Dom34-Hbs1 complex, a complex that recognizes stalled ribosomes and triggers the No-Go Decay (NGD) pathway. In the Dom34-Hbs1 complex, dom34 recognizes ribosomes stalled at the 3' end of an mRNA and engages stalled ribosomes by destabilizing mRNA in the mRNA channel. Following ribosome-binding, the Dom34-Hbs1 complex promotes the disassembly of stalled ribosomes, followed by degradation of damaged mRNAs as part of the NGD pathway. This is Protein dom34 from Schizosaccharomyces pombe (strain 972 / ATCC 24843) (Fission yeast).